The sequence spans 750 residues: Photosystem I P700 chlorophyll a apoprotein A1 (750 aa).

8 helical membrane passes run 70 to 93 (VFSA…FHGA), 156 to 179 (LYCT…FHYH), 195 to 219 (LNHH…HVSL), 291 to 309 (IAHH…GHMY), 346 to 369 (WHAQ…HHMY), 385 to 411 (LSLF…IFMV), 433 to 455 (AIIS…LYIH), and 531 to 549 (FLVH…LILL). [4Fe-4S] cluster is bound by residues C573 and C582. A run of 2 helical transmembrane segments spans residues 589-610 (HVFL…HFSW) and 664-686 (LSAY…MFLF). Chlorophyll a' is bound at residue H675. Residues M683 and Y691 each contribute to the chlorophyll a site. Position 692 (W692) interacts with phylloquinone. Residues 724-744 (AVGVTHYLLGGIATTWAFFLA) form a helical membrane-spanning segment.

Belongs to the PsaA/PsaB family. In terms of assembly, the PsaA/B heterodimer binds the P700 chlorophyll special pair and subsequent electron acceptors. PSI consists of a core antenna complex that captures photons, and an electron transfer chain that converts photonic excitation into a charge separation. The eukaryotic PSI reaction center is composed of at least 11 subunits. The cofactor is P700 is a chlorophyll a/chlorophyll a' dimer, A0 is one or more chlorophyll a, A1 is one or both phylloquinones and FX is a shared 4Fe-4S iron-sulfur center..

The protein localises to the plastid. The protein resides in the chloroplast thylakoid membrane. The enzyme catalyses reduced [plastocyanin] + hnu + oxidized [2Fe-2S]-[ferredoxin] = oxidized [plastocyanin] + reduced [2Fe-2S]-[ferredoxin]. Functionally, psaA and PsaB bind P700, the primary electron donor of photosystem I (PSI), as well as the electron acceptors A0, A1 and FX. PSI is a plastocyanin-ferredoxin oxidoreductase, converting photonic excitation into a charge separation, which transfers an electron from the donor P700 chlorophyll pair to the spectroscopically characterized acceptors A0, A1, FX, FA and FB in turn. Oxidized P700 is reduced on the lumenal side of the thylakoid membrane by plastocyanin. This is Photosystem I P700 chlorophyll a apoprotein A1 from Oryza nivara (Indian wild rice).